Consider the following 308-residue polypeptide: Ribosomal RNA small subunit methyltransferase A (308 aa).

S-adenosyl-L-methionine-binding residues include Asn-35, Val-37, Gly-62, Glu-83, Asp-113, and Asn-136.

This sequence belongs to the class I-like SAM-binding methyltransferase superfamily. rRNA adenine N(6)-methyltransferase family. RsmA subfamily.

The protein resides in the cytoplasm. The enzyme catalyses adenosine(1518)/adenosine(1519) in 16S rRNA + 4 S-adenosyl-L-methionine = N(6)-dimethyladenosine(1518)/N(6)-dimethyladenosine(1519) in 16S rRNA + 4 S-adenosyl-L-homocysteine + 4 H(+). Functionally, specifically dimethylates two adjacent adenosines (A1518 and A1519) in the loop of a conserved hairpin near the 3'-end of 16S rRNA in the 30S particle. May play a critical role in biogenesis of 30S subunits. The polypeptide is Ribosomal RNA small subunit methyltransferase A (Bifidobacterium longum (strain NCC 2705)).